A 337-amino-acid chain; its full sequence is Delta-aminolevulinic acid dehydratase (337 aa).

The active-site Schiff-base intermediate with substrate is Lys-205. Positions 215 and 229 each coordinate 5-aminolevulinate. Glu-245 is a Mg(2+) binding site. Residue Lys-260 is the Schiff-base intermediate with substrate of the active site. The 5-aminolevulinate site is built by Ser-286 and Tyr-324.

This sequence belongs to the ALAD family. In terms of assembly, homooctamer; formed by oligomerization of dimers. Requires Mg(2+) as cofactor.

It catalyses the reaction 2 5-aminolevulinate = porphobilinogen + 2 H2O + H(+). The protein operates within porphyrin-containing compound metabolism; protoporphyrin-IX biosynthesis; coproporphyrinogen-III from 5-aminolevulinate: step 1/4. Its activity is regulated as follows. Stimulated by magnesium ions. Its function is as follows. Catalyzes an early step in the biosynthesis of tetrapyrroles. Binds two molecules of 5-aminolevulinate per subunit, each at a distinct site, and catalyzes their condensation to form porphobilinogen. This Pseudomonas aeruginosa (strain ATCC 15692 / DSM 22644 / CIP 104116 / JCM 14847 / LMG 12228 / 1C / PRS 101 / PAO1) protein is Delta-aminolevulinic acid dehydratase (hemB).